We begin with the raw amino-acid sequence, 224 residues long: Inhibitor of apoptosis protein (224 aa).

A BIR repeat occupies 29–92 (VDARNKSFAI…GFWSRNCGFM (64 aa)). Residues C62, C65, H82, and C89 each contribute to the Zn(2+) site. The C4-type zinc-finger motif lies at 189 to 207 (CMTCGIEQINKDENFCSAC).

Belongs to the asfivirus IAP family. Interacts with subunit p17 of host CASP3.

Its subcellular location is the host cytoplasm. It is found in the virion. In terms of biological role, prevents apoptosis of host cell by inhibiting caspase-3/CASP3 activation to promote the viral replication. Also induces the activation of host NF-kappaB. This Ornithodoros (relapsing fever ticks) protein is Inhibitor of apoptosis protein.